A 431-amino-acid polypeptide reads, in one-letter code: Probable glucarate dehydratase (431 aa).

The substrate site is built by His-29, Thr-108, Tyr-153, and Lys-198. Lys-200 functions as the Proton acceptor in the catalytic mechanism. The Mg(2+) site is built by Asp-228 and Asn-276. Substrate-binding positions include 228–230 (DPN), Asn-276, 327–329 (HSN), His-356, and Arg-410. The active-site Proton acceptor is the His-327.

Belongs to the mandelate racemase/muconate lactonizing enzyme family. GlucD subfamily. Mg(2+) is required as a cofactor.

The enzyme catalyses D-glucarate = 5-dehydro-4-deoxy-D-glucarate + H2O. It functions in the pathway carbohydrate acid metabolism; D-glucarate degradation; 2,5-dioxopentanoate from D-glucarate: step 1/2. In terms of biological role, catalyzes the dehydration of glucarate to 5-keto-4-deoxy-D-glucarate (5-kdGluc). This Streptomyces coelicolor (strain ATCC BAA-471 / A3(2) / M145) protein is Probable glucarate dehydratase (gudD).